Here is a 434-residue protein sequence, read N- to C-terminus: Aspartate--tRNA(Asp/Asn) ligase (434 aa).

Residue glutamate 167 participates in L-aspartate binding. The aspartate stretch occupies residues 189-192; that stretch reads QLFK. L-aspartate is bound at residue arginine 211. Residues 211 to 213, 219 to 221, and glutamate 357 contribute to the ATP site; these read RAE and RHL. Mg(2+) contacts are provided by glutamate 357 and serine 360. L-aspartate is bound by residues serine 360 and arginine 364. Residue 405-408 coordinates ATP; sequence GGER.

The protein belongs to the class-II aminoacyl-tRNA synthetase family. Type 2 subfamily. In terms of assembly, homodimer. Requires Mg(2+) as cofactor.

Its subcellular location is the cytoplasm. The catalysed reaction is tRNA(Asx) + L-aspartate + ATP = L-aspartyl-tRNA(Asx) + AMP + diphosphate. Aspartyl-tRNA synthetase with relaxed tRNA specificity since it is able to aspartylate not only its cognate tRNA(Asp) but also tRNA(Asn). Reaction proceeds in two steps: L-aspartate is first activated by ATP to form Asp-AMP and then transferred to the acceptor end of tRNA(Asp/Asn). This is Aspartate--tRNA(Asp/Asn) ligase from Haloquadratum walsbyi (strain DSM 16790 / HBSQ001).